A 906-amino-acid polypeptide reads, in one-letter code: Cadherin-2 (906 aa).

The N-terminal stretch at 1 to 25 is a signal peptide; that stretch reads MCRIAGAPRTLLPLLAALLQASVEA. The propeptide occupies 26 to 159; it reads SGEIALCKTG…HNGYLQRQKR (134 aa). Ser-96 and Ser-135 each carry phosphoserine. Cadherin domains are found at residues 160–267, 268–382, 383–497, 498–603, and 604–714; these read DWVI…RPEF, LHQV…PPEF, TAMT…NPYF, APNP…DNAP, and QVLP…DVDR. Residues 160–724 lie on the Extracellular side of the membrane; that stretch reads DWVIPPINLP…IVGAGLGTGA (565 aa). Glu-170 contacts Ca(2+). The N-linked (GlcNAc...) asparagine glycan is linked to Asn-190. The Ca(2+) site is built by Asp-226, Glu-228, Asp-259, Met-260, Asn-261, Asp-262, and Asn-263. Asn-273 carries an N-linked (GlcNAc...) asparagine glycan. Residues Asp-293, Asp-295, and Asn-301 each contribute to the Ca(2+) site. The N-linked (GlcNAc...) asparagine glycan is linked to Asn-325. Position 353 (Asp-353) interacts with Ca(2+). 5 N-linked (GlcNAc...) asparagine glycosylation sites follow: Asn-402, Asn-572, Asn-622, Asn-651, and Asn-692. A helical transmembrane segment spans residues 725-745; the sequence is IIAILLCIIILLILVLMFVVW. Over 746-906 the chain is Cytoplasmic; sequence MKRRDKERQA…LAEMYGGGDD (161 aa). Positions 863 to 880 are enriched in low complexity; sequence SGSTAGSLSSLNSSSSGG. Residues 863 to 884 are disordered; the sequence is SGSTAGSLSSLNSSSSGGEQDY.

As to quaternary structure, homodimer (via extracellular region). Can also form heterodimers with other cadherins (via extracellular region). Dimerization occurs in trans, i.e. with a cadherin chain from another cell. Interacts with CDCP1. Interacts with PCDH8; this complex may also include TAOK2. The interaction with PCDH8 may lead to internalization through TAOK2/p38 MAPK pathway. Identified in a complex containing FGFR4, NCAM1, CDH2, PLCG1, FRS2, SRC, SHC1, GAP43 and CTTN. May interact with OBSCN (via protein kinase domain 2). Interacts with FBXO45. Cleaved by MMP24. Ectodomain cleavage leads to the generation of a soluble 90 kDa N-terminal soluble fragment and a 45 kDa membrane-bound C-terminal fragment 1 (CTF1), which is further cleaved by gamma-secretase into a 35 kDa. Cleavage in neural stem cells by MMP24 affects CDH2-mediated anchorage of neural stem cells to ependymocytes in the adult subependymal zone, leading to modulate neural stem cell quiescence. Post-translationally, may be phosphorylated by OBSCN.

It is found in the cell membrane. The protein resides in the sarcolemma. It localises to the cell junction. The protein localises to the cell surface. Its subcellular location is the desmosome. It is found in the adherens junction. Functionally, calcium-dependent cell adhesion protein; preferentially mediates homotypic cell-cell adhesion by dimerization with a CDH2 chain from another cell. Cadherins may thus contribute to the sorting of heterogeneous cell types. Acts as a regulator of neural stem cells quiescence by mediating anchorage of neural stem cells to ependymocytes in the adult subependymal zone: upon cleavage by MMP24, CDH2-mediated anchorage is affected, leading to modulate neural stem cell quiescence. Plays a role in cell-to-cell junction formation between pancreatic beta cells and neural crest stem (NCS) cells, promoting the formation of processes by NCS cells. Required for proper neurite branching. Required for pre- and postsynaptic organization. CDH2 may be involved in neuronal recognition mechanism. In hippocampal neurons, may regulate dendritic spine density. The protein is Cadherin-2 (CDH2) of Otolemur garnettii (Small-eared galago).